The following is a 103-amino-acid chain: Large ribosomal subunit protein bL21 (103 aa).

Belongs to the bacterial ribosomal protein bL21 family. In terms of assembly, part of the 50S ribosomal subunit. Contacts protein L20.

In terms of biological role, this protein binds to 23S rRNA in the presence of protein L20. The chain is Large ribosomal subunit protein bL21 from Histophilus somni (strain 129Pt) (Haemophilus somnus).